The primary structure comprises 376 residues: MLNFELITTDGNARRGRVTLNHGVVETPIFMPVGTYGSVKAMSPLELNEIGAEIILGNTFHLWLRPGLDVVNTHEGLHRFIGWDKPILTDSGGFQVFSLGDLRKITEDGVTFASPVNGDKLFLSPEISMQIQRTLNSDIVMQFDECTPYEIEGRPATHEEAAKSMRMSLRWAKRSRDEFERLANPNALFGIVQGGMFEDLRDESLAGLSELDFHGFAIGGLSVGEPKEDMMRVLEHVAPRLPADKPHYLMGVGTPEDLVAGVAAGVDMFDCVMPTRNARNGWLFTRYGDVKIRNAAHRNDPRPLDESCACYTCRNFSRAYLHHLHRVGEILGARLNTIHNLHYYLQLMREVRESIEQHRFSDFRRQFASDRARGTR.

Asp90 serves as the catalytic Proton acceptor. Substrate is bound by residues 90 to 94 (DSGGF), Asp144, Gln193, and Gly220. Residues 251 to 257 (GVGTPED) form an RNA binding region. Asp270 functions as the Nucleophile in the catalytic mechanism. Residues 275 to 279 (TRNAR) form an RNA binding; important for wobble base 34 recognition region. 4 residues coordinate Zn(2+): Cys308, Cys310, Cys313, and His339.

Belongs to the queuine tRNA-ribosyltransferase family. As to quaternary structure, homodimer. Within each dimer, one monomer is responsible for RNA recognition and catalysis, while the other monomer binds to the replacement base PreQ1. Zn(2+) is required as a cofactor.

It carries out the reaction 7-aminomethyl-7-carbaguanine + guanosine(34) in tRNA = 7-aminomethyl-7-carbaguanosine(34) in tRNA + guanine. It functions in the pathway tRNA modification; tRNA-queuosine biosynthesis. Its function is as follows. Catalyzes the base-exchange of a guanine (G) residue with the queuine precursor 7-aminomethyl-7-deazaguanine (PreQ1) at position 34 (anticodon wobble position) in tRNAs with GU(N) anticodons (tRNA-Asp, -Asn, -His and -Tyr). Catalysis occurs through a double-displacement mechanism. The nucleophile active site attacks the C1' of nucleotide 34 to detach the guanine base from the RNA, forming a covalent enzyme-RNA intermediate. The proton acceptor active site deprotonates the incoming PreQ1, allowing a nucleophilic attack on the C1' of the ribose to form the product. After dissociation, two additional enzymatic reactions on the tRNA convert PreQ1 to queuine (Q), resulting in the hypermodified nucleoside queuosine (7-(((4,5-cis-dihydroxy-2-cyclopenten-1-yl)amino)methyl)-7-deazaguanosine). This Cupriavidus pinatubonensis (strain JMP 134 / LMG 1197) (Cupriavidus necator (strain JMP 134)) protein is Queuine tRNA-ribosyltransferase.